Consider the following 33-residue polypeptide: Brevinin-2Ef (33 aa).

C27 and C33 are oxidised to a cystine.

Expressed by the skin glands.

The protein localises to the secreted. Functionally, shows antibacterial activity against representative Gram-negative and Gram-positive bacterial species, and hemolytic activity. The polypeptide is Brevinin-2Ef (Pelophylax ridibundus (Marsh frog)).